The following is a 324-amino-acid chain: Polycomb complex protein BMI-1-B (324 aa).

Residues C18 to D57 form an RING-type zinc finger. Positions K81–R95 match the Nuclear localization signal motif. The interval I232–G324 is disordered. Residues D256–P279 are compositionally biased toward low complexity. Polar residues-rich tracts occupy residues V280 to G295 and N303 to G324.

Component of a PRC1-like complex. Homodimer. Interacts with cbx2.

The protein resides in the nucleus. Functionally, component of a Polycomb group (PcG) multiprotein PRC1-like complex, a complex class required to maintain the transcriptionally repressive state of many genes, including Hox genes, throughout development. PcG PRC1 complex acts via chromatin remodeling and modification of histones; it mediates monoubiquitination of histone H2A 'Lys-119', rendering chromatin heritably changed in its expressibility. In the PRC1 complex, it is required to stimulate the E3 ubiquitin-protein ligase activity of rnf2. This is Polycomb complex protein BMI-1-B (bmi1b) from Danio rerio (Zebrafish).